Reading from the N-terminus, the 510-residue chain is Pheromone-processing carboxypeptidase kex1 (510 aa).

A signal peptide spans 1–21 (MISKLLKIVLLTAGVIGNTLA). Topologically, residues 22-468 (DSRIHEQYLV…SPDLGNGNYK (447 aa)) are lumenal. Asn-51 and Asn-104 each carry an N-linked (GlcNAc...) asparagine glycan. Active-site residues include Ser-175 and Asp-367. N-linked (GlcNAc...) asparagine glycans are attached at residues Asn-392 and Asn-416. His-427 is a catalytic residue. The chain crosses the membrane as a helical span at residues 469–489 (WLYLGLIPVALTIIILFSIYL). The Cytoplasmic portion of the chain corresponds to 490–510 (CRRFGLFGLSKQRYQPISPTP).

The protein belongs to the peptidase S10 family.

It localises to the golgi apparatus. It is found in the trans-Golgi network membrane. The protein resides in the vacuole membrane. It catalyses the reaction Preferential release of a C-terminal arginine or lysine residue.. In terms of biological role, protease with a carboxypeptidase B-like function involved in the C-terminal processing of the lysine and arginine residues from protein precursors. Promotes cell fusion and is involved in the programmed cell death. This chain is Pheromone-processing carboxypeptidase kex1 (kex1), found in Schizosaccharomyces pombe (strain 972 / ATCC 24843) (Fission yeast).